The sequence spans 395 residues: Nicotinamide/nicotinic acid mononucleotide adenylyltransferase 2 (395 aa).

2 disordered regions span residues Met-1–Ile-34 and Lys-62–Asp-102. The span at Phe-9 to Pro-24 shows a compositional bias: pro residues. Phosphoserine occurs at positions 85, 89, and 90. NAD(+) is bound by residues Ser-167 and Phe-168. His-175 and Arg-209 together coordinate ATP. Residues Thr-247, Gly-282, Asp-284, Trp-295, Arg-314, and Asn-345 each coordinate NAD(+). Thr-350–Arg-353 lines the ATP pocket.

This sequence belongs to the eukaryotic NMN adenylyltransferase family. Requires Co(2+) as cofactor.

The protein localises to the nucleus. The enzyme catalyses beta-nicotinamide D-ribonucleotide + ATP + H(+) = diphosphate + NAD(+). It carries out the reaction nicotinate beta-D-ribonucleotide + ATP + H(+) = deamido-NAD(+) + diphosphate. It functions in the pathway cofactor biosynthesis; NAD(+) biosynthesis; deamido-NAD(+) from nicotinate D-ribonucleotide: step 1/1. Its pathway is cofactor biosynthesis; NAD(+) biosynthesis; NAD(+) from nicotinamide D-ribonucleotide: step 1/1. In terms of biological role, catalyzes the formation of NAD(+) from nicotinamide mononucleotide (NMN) and ATP. Can also use the deamidated form; nicotinic acid mononucleotide (NaMN) as substrate to form deamido-NAD(+) (NaAD). Key enzyme in both de novo and salvage pathways for NAD(+) biosynthesis. Predominantly acts in the salvage pathways via NMN. The sequence is that of Nicotinamide/nicotinic acid mononucleotide adenylyltransferase 2 from Saccharomyces cerevisiae (strain ATCC 204508 / S288c) (Baker's yeast).